A 295-amino-acid polypeptide reads, in one-letter code: Ribosomal protein L11 methyltransferase (295 aa).

The S-adenosyl-L-methionine site is built by Thr138, Gly161, Asp183, and Asn230.

It belongs to the methyltransferase superfamily. PrmA family.

The protein resides in the cytoplasm. It carries out the reaction L-lysyl-[protein] + 3 S-adenosyl-L-methionine = N(6),N(6),N(6)-trimethyl-L-lysyl-[protein] + 3 S-adenosyl-L-homocysteine + 3 H(+). In terms of biological role, methylates ribosomal protein L11. The polypeptide is Ribosomal protein L11 methyltransferase (Bradyrhizobium diazoefficiens (strain JCM 10833 / BCRC 13528 / IAM 13628 / NBRC 14792 / USDA 110)).